Here is a 144-residue protein sequence, read N- to C-terminus: Transcription antitermination protein NusB (144 aa).

The protein belongs to the NusB family.

Its function is as follows. Involved in transcription antitermination. Required for transcription of ribosomal RNA (rRNA) genes. Binds specifically to the boxA antiterminator sequence of the ribosomal RNA (rrn) operons. The chain is Transcription antitermination protein NusB from Dictyoglomus thermophilum (strain ATCC 35947 / DSM 3960 / H-6-12).